Here is an 876-residue protein sequence, read N- to C-terminus: Valine--tRNA ligase (876 aa).

The 'HIGH' region signature appears at 44 to 54 (PNVTGKLHLGH). A 'KMSKS' region motif is present at residues 520–524 (KMSKS). Lys523 contributes to the ATP binding site. Residues 805–876 (LEGLIDMDKE…VKSRIEQLKA (72 aa)) are a coiled coil.

The protein belongs to the class-I aminoacyl-tRNA synthetase family. ValS type 1 subfamily. Monomer.

The protein resides in the cytoplasm. It carries out the reaction tRNA(Val) + L-valine + ATP = L-valyl-tRNA(Val) + AMP + diphosphate. In terms of biological role, catalyzes the attachment of valine to tRNA(Val). As ValRS can inadvertently accommodate and process structurally similar amino acids such as threonine, to avoid such errors, it has a 'posttransfer' editing activity that hydrolyzes mischarged Thr-tRNA(Val) in a tRNA-dependent manner. The polypeptide is Valine--tRNA ligase (Staphylococcus epidermidis (strain ATCC 35984 / DSM 28319 / BCRC 17069 / CCUG 31568 / BM 3577 / RP62A)).